The sequence spans 163 residues: Outer membrane protein assembly factor BamE (163 aa).

The first 22 residues, 1-22, serve as a signal peptide directing secretion; it reads MINKKQSLTLLSAIALSVSLSA. Cys-23 carries the N-palmitoyl cysteine lipid modification. A lipid anchor (S-diacylglycerol cysteine) is attached at Cys-23. Residues 122–163 are disordered; it reads EQSKLPMVNTTESAPQVPAQRPDEKPLVKENQTEAQVQKPIK. Residues 142 to 153 are compositionally biased toward basic and acidic residues; it reads RPDEKPLVKENQ.

It belongs to the BamE family. Part of the Bam complex.

The protein localises to the cell outer membrane. Part of the outer membrane protein assembly complex, which is involved in assembly and insertion of beta-barrel proteins into the outer membrane. In Shewanella oneidensis (strain ATCC 700550 / JCM 31522 / CIP 106686 / LMG 19005 / NCIMB 14063 / MR-1), this protein is Outer membrane protein assembly factor BamE.